A 401-amino-acid polypeptide reads, in one-letter code: Acetate kinase (401 aa).

A Mg(2+)-binding site is contributed by Asn9. Lys16 is a binding site for ATP. Arg88 is a substrate binding site. The active-site Proton donor/acceptor is Asp147. ATP contacts are provided by residues 207–211 (HLGNG), 282–284 (DCR), and 333–337 (GIGEN). A Mg(2+)-binding site is contributed by Glu388.

The protein belongs to the acetokinase family. As to quaternary structure, homodimer. Mg(2+) serves as cofactor. Mn(2+) is required as a cofactor.

Its subcellular location is the cytoplasm. The catalysed reaction is acetate + ATP = acetyl phosphate + ADP. The protein operates within metabolic intermediate biosynthesis; acetyl-CoA biosynthesis; acetyl-CoA from acetate: step 1/2. Functionally, catalyzes the formation of acetyl phosphate from acetate and ATP. Can also catalyze the reverse reaction. The chain is Acetate kinase from Haemophilus influenzae (strain PittEE).